Consider the following 299-residue polypeptide: MSEPIDLSQIAPTLKAEILAEALPYIRRYHGKTVVIKYGGNAMTEERLKQGFARDVILLKLVGINPVIVHGGGPQIDQALKKIGKAGTFIQGMRVTDEETMEVVEWVLGGEVQQDIVTLINHFGGHAVGLTGKDGGLIHARKLLMPDRDNPGQYIDIGQVGEVEAINPAVVKALQDDAFIPVISPIGFGEDGLSYNINADLVAGKLATVLNAEKLLMMTNIPGVMDKDGNLLTDLSAREIDALFEDGTISGGMLPKISSALDAAKSGVKSVHIVDGRIEHSVLLEILTEQPFGTMIRSH.

Residues 72–73 (GG), arginine 94, and asparagine 196 each bind substrate.

The protein belongs to the acetylglutamate kinase family. ArgB subfamily.

Its subcellular location is the cytoplasm. It carries out the reaction N-acetyl-L-glutamate + ATP = N-acetyl-L-glutamyl 5-phosphate + ADP. Its pathway is amino-acid biosynthesis; L-arginine biosynthesis; N(2)-acetyl-L-ornithine from L-glutamate: step 2/4. In terms of biological role, catalyzes the ATP-dependent phosphorylation of N-acetyl-L-glutamate. In Burkholderia ambifaria (strain MC40-6), this protein is Acetylglutamate kinase.